A 195-amino-acid chain; its full sequence is Probable GTP-binding protein EngB (195 aa).

One can recognise an EngB-type G domain in the interval 22–195; sequence GYPEIALVGR…WKWIEDRMGE (174 aa). Residues 30 to 37, 57 to 61, 75 to 78, 142 to 145, and 173 to 176 each bind GTP; these read GRSNVGKS, GKTQT, DVPG, TKSD, and MFSA. The Mg(2+) site is built by S37 and T59.

This sequence belongs to the TRAFAC class TrmE-Era-EngA-EngB-Septin-like GTPase superfamily. EngB GTPase family. Requires Mg(2+) as cofactor.

In terms of biological role, necessary for normal cell division and for the maintenance of normal septation. In Pediococcus pentosaceus (strain ATCC 25745 / CCUG 21536 / LMG 10740 / 183-1w), this protein is Probable GTP-binding protein EngB.